We begin with the raw amino-acid sequence, 117 residues long: Transcription elongation factor A protein-like 8 (117 aa).

The interval 1–81 (MQKSCDENEG…PEEVIRGVDE (81 aa)) is disordered. Basic and acidic residues predominate over residues 41-81 (NVREETDGSLRGEPAEPSPEPKEDTPARHLNPEEVIRGVDE). A coiled-coil region spans residues 73–100 (EEVIRGVDELERLREEIRRVRNKFVLMH).

The protein belongs to the TFS-II family. TFA subfamily. In terms of tissue distribution, highly expressed in kidney. Moderately expressed in heart and lung. Low expression in brain and liver. Expression is up-regulated in nephrectomized kidney.

The protein localises to the nucleus. Its function is as follows. May be involved in transcriptional regulation. This chain is Transcription elongation factor A protein-like 8 (Tceal8), found in Rattus norvegicus (Rat).